The primary structure comprises 370 residues: Protein Mut11 (370 aa).

A disordered region spans residues 1 to 22 (MARGPGDTDMDEASADAAIPSS). WD repeat units lie at residues 38 to 77 (GHTK…RVNT), 80 to 119 (GHSC…CLRT), 122 to 162 (GHTN…CLRE), 165 to 204 (AHSD…CLKT), 208 to 247 (RDSP…TRRT), 262 to 301 (GFLG…VVGR), and 329 to 370 (GHTA…PAAA).

The protein belongs to the WD repeat WDR5/wds family.

The protein localises to the nucleus. Part of a complex involved in 'Lys-4' histone H3 methylation. The chain is Protein Mut11 (Mut11) from Chlamydomonas reinhardtii (Chlamydomonas smithii).